Consider the following 201-residue polypeptide: 3-isopropylmalate dehydratase small subunit (201 aa).

It belongs to the LeuD family. LeuD type 1 subfamily. In terms of assembly, heterodimer of LeuC and LeuD.

The catalysed reaction is (2R,3S)-3-isopropylmalate = (2S)-2-isopropylmalate. Its pathway is amino-acid biosynthesis; L-leucine biosynthesis; L-leucine from 3-methyl-2-oxobutanoate: step 2/4. Functionally, catalyzes the isomerization between 2-isopropylmalate and 3-isopropylmalate, via the formation of 2-isopropylmaleate. The sequence is that of 3-isopropylmalate dehydratase small subunit from Shigella boydii serotype 18 (strain CDC 3083-94 / BS512).